We begin with the raw amino-acid sequence, 348 residues long: RNA 3'-terminal phosphate cyclase (348 aa).

ATP is bound by residues glutamine 107 and 290–294 (HLADQ). Residue histidine 316 is the Tele-AMP-histidine intermediate of the active site.

The protein belongs to the RNA 3'-terminal cyclase family. Type 1 subfamily.

It localises to the cytoplasm. The enzyme catalyses a 3'-end 3'-phospho-ribonucleotide-RNA + ATP = a 3'-end 2',3'-cyclophospho-ribonucleotide-RNA + AMP + diphosphate. Functionally, catalyzes the conversion of 3'-phosphate to a 2',3'-cyclic phosphodiester at the end of RNA. The mechanism of action of the enzyme occurs in 3 steps: (A) adenylation of the enzyme by ATP; (B) transfer of adenylate to an RNA-N3'P to produce RNA-N3'PP5'A; (C) and attack of the adjacent 2'-hydroxyl on the 3'-phosphorus in the diester linkage to produce the cyclic end product. The biological role of this enzyme is unknown but it is likely to function in some aspects of cellular RNA processing. The chain is RNA 3'-terminal phosphate cyclase (rtcA) from Nostoc sp. (strain PCC 7120 / SAG 25.82 / UTEX 2576).